The chain runs to 331 residues: Transmembrane protein 59-like (331 aa).

Residues 1 to 21 (MAAVALPLLLLLASPATPTPA) form the signal peptide. A disordered region spans residues 15–62 (PATPTPARDPFSPQLGDTQRCQQRCRQRHPGLPPAQPEPEGPSESPNN). Residues 45–54 (GLPPAQPEPE) show a composition bias toward pro residues. Asparagine 90 carries N-linked (GlcNAc...) asparagine glycosylation. A helical transmembrane segment spans residues 258–278 (VLFCCLFLSVLIILWLSCCTL). Residues 329 to 331 (TTL) carry the Microbody targeting signal motif.

It belongs to the TMEM59 family.

The protein localises to the golgi apparatus membrane. Its function is as follows. Modulates the O-glycosylation and complex N-glycosylation steps occurring during the Golgi maturation of APP. Inhibits APP transport to the cell surface and further shedding. The polypeptide is Transmembrane protein 59-like (Tmem59l) (Rattus norvegicus (Rat)).